Reading from the N-terminus, the 494-residue chain is AAA-ATPase At2g18190 (494 aa).

Residues 13–29 (SSLFTAYASLTGFLMLF) form a helical membrane-spanning segment. 251–258 (GPPGTGKS) serves as a coordination point for ATP. Residues 459-470 (TCRKLDGDDKHN) are compositionally biased toward basic and acidic residues. Positions 459–494 (TCRKLDGDDKHNVSSTNDLKKTKKKKKGGKGKAKGN) are disordered. Over residues 479 to 494 (KTKKKKKGGKGKAKGN) the composition is skewed to basic residues.

Belongs to the AAA ATPase family. BCS1 subfamily. The cofactor is Mg(2+).

Its subcellular location is the membrane. It catalyses the reaction ATP + H2O = ADP + phosphate + H(+). The protein is AAA-ATPase At2g18190 of Arabidopsis thaliana (Mouse-ear cress).